The primary structure comprises 506 residues: Histone deacetylase complex subunit CTI6 (506 aa).

Residues 49–71 are disordered; that stretch reads EESVKQEDVPMEGGEGEVEEEEG. Residues 62–71 are compositionally biased toward acidic residues; sequence GEGEVEEEEG. The PHD-type zinc-finger motif lies at 72-123; that stretch reads ETRCICGELDTPDDSGFFIQCEQCSSWQHGYCVSITQDNAPDKYWCEQCRPE. The disordered stretch occupies residues 138–425; it reads IYKPVQEKRR…KPRLPPQRTS (288 aa). Thr-174 carries the post-translational modification Phosphothreonine. Ser-175 is subject to Phosphoserine. Residue Thr-177 is modified to Phosphothreonine. The segment covering 179-195 has biased composition (acidic residues); the sequence is DNVDDIGDEEDEVEDEA. A phosphoserine mark is found at Ser-216 and Ser-267. 2 stretches are compositionally biased toward basic and acidic residues: residues 231–271 and 312–342; these read DSDK…HQED and DDMKESLRPSKEQSMEKTNDVEKEASQEKES. Basic residues predominate over residues 373-393; sequence ASSRGSKRVSKPARKGNRTRR. Residues 394 to 404 show a composition bias toward polar residues; the sequence is SNTSSDTNQNR. The segment covering 405–415 has biased composition (basic and acidic residues); that stretch reads RSADIGTDKPV.

Component of the RPD3C(L) complex composed of at least ASH1, CTI6, DEP1, PHO23, RPD3, RXT2, RXT3, SAP30, SDS3, SIN3, UME1 and UME6. Interacts with CYC8.

Its subcellular location is the nucleus. Its function is as follows. Component of the RPD3C(L) histone deacetylase complex (HDAC). Responsible for the deacetylation of lysine residues on the N-terminal part of the core histones (H2A, H2B, H3 and H4). Histone deacetylation gives a tag for epigenetic repression and plays an important role in transcriptional regulation, cell cycle progression and developmental events. CTI6 links the SAGA coactivator to the CYC8-TUP1 corepressor. Involved in transcription regulation of heme-regulated genes and required for GCN5 recruitment, histone H3 acetylation and SPT15/TBP binding to promoters. This is Histone deacetylase complex subunit CTI6 (CTI6) from Saccharomyces cerevisiae (strain ATCC 204508 / S288c) (Baker's yeast).